Here is a 219-residue protein sequence, read N- to C-terminus: Vesicle-associated membrane protein 711 (219 aa).

Alanine 2 is subject to N-acetylalanine. Topologically, residues 2 to 189 (AILYALVARG…RSNVWWRNCK (188 aa)) are cytoplasmic. The 105-residue stretch at 7 to 111 (LVARGTVVLS…AMNEEFSRVL (105 aa)) folds into the Longin domain. The v-SNARE coiled-coil homology domain occupies 126-186 (RINRIKGEMN…RRFRSNVWWR (61 aa)). A helical; Anchor for type IV membrane protein membrane pass occupies residues 190-210 (LTVLLILLLLVIIYIAVAFLC). At 211 to 219 (HGPTLPSCI) the chain is on the vesicular side.

It belongs to the synaptobrevin family. As to expression, expressed in flowers, leaves, stems and roots.

It localises to the vacuole membrane. It is found in the prevacuolar compartment membrane. Involved in the targeting and/or fusion of transport vesicles to their target membrane. The polypeptide is Vesicle-associated membrane protein 711 (Arabidopsis thaliana (Mouse-ear cress)).